We begin with the raw amino-acid sequence, 96 residues long: ESAT-6-like protein EsxR (96 aa).

Belongs to the WXG100 family. ESAT-6 subfamily.

It is found in the secreted. This Mycobacterium bovis (strain ATCC BAA-935 / AF2122/97) protein is ESAT-6-like protein EsxR.